Here is a 200-residue protein sequence, read N- to C-terminus: Lipopolysaccharide core heptose(II)-phosphate phosphatase (200 aa).

A signal peptide spans 1 to 25 (MLAFCRSSLKSKKYIIILLALAAIA).

This sequence belongs to the phosphoglycerate mutase family. Ais subfamily.

It localises to the periplasm. It participates in bacterial outer membrane biogenesis; lipopolysaccharide metabolism. In terms of biological role, catalyzes the dephosphorylation of heptose(II) of the outer membrane lipopolysaccharide core. The sequence is that of Lipopolysaccharide core heptose(II)-phosphate phosphatase from Escherichia coli (strain ATCC 8739 / DSM 1576 / NBRC 3972 / NCIMB 8545 / WDCM 00012 / Crooks).